We begin with the raw amino-acid sequence, 414 residues long: Glucose-1-phosphate adenylyltransferase (414 aa).

Residues Tyr103, Gly168, Glu183 to Lys184, and Ser201 contribute to the alpha-D-glucose 1-phosphate site.

This sequence belongs to the bacterial/plant glucose-1-phosphate adenylyltransferase family. Homotetramer.

The catalysed reaction is alpha-D-glucose 1-phosphate + ATP + H(+) = ADP-alpha-D-glucose + diphosphate. It participates in glycan biosynthesis; glycogen biosynthesis. In terms of biological role, involved in the biosynthesis of ADP-glucose, a building block required for the elongation reactions to produce glycogen. Catalyzes the reaction between ATP and alpha-D-glucose 1-phosphate (G1P) to produce pyrophosphate and ADP-Glc. In Thermus thermophilus (strain ATCC 27634 / DSM 579 / HB8), this protein is Glucose-1-phosphate adenylyltransferase.